The sequence spans 179 residues: MHNDLKEVLLTEEDIQNICKELGAQLTKDYQGKPLVCVGILKGSAMFMSDLIKRIDTHLSIDFMDVSSYHGGTESTGEVQIIKDLGSSIENKDVLIIEDILETGTTLKSITELLQSRKVNSLEIVTLLDKPNRRKADIEAKYVGKKIPDEFVVGYGLDYRELYRNLPYIGTLKPEVYSN.

Positions 42 and 43 each coordinate diphosphate. Residues glutamate 98 and aspartate 99 each coordinate Mg(2+). Glutamate 102 acts as the Proton acceptor in catalysis. GMP-binding positions include lysine 130, 151-152 (FV), and aspartate 158. Arginine 164 provides a ligand contact to diphosphate.

This sequence belongs to the purine/pyrimidine phosphoribosyltransferase family. It depends on Mg(2+) as a cofactor.

It localises to the cytoplasm. It carries out the reaction IMP + diphosphate = hypoxanthine + 5-phospho-alpha-D-ribose 1-diphosphate. The catalysed reaction is GMP + diphosphate = guanine + 5-phospho-alpha-D-ribose 1-diphosphate. The protein operates within purine metabolism; IMP biosynthesis via salvage pathway; IMP from hypoxanthine: step 1/1. It functions in the pathway purine metabolism; GMP biosynthesis via salvage pathway; GMP from guanine: step 1/1. Purine salvage pathway enzyme that catalyzes the transfer of the ribosyl-5-phosphate group from 5-phospho-alpha-D-ribose 1-diphosphate (PRPP) to the N9 position of the 6-oxopurines hypoxanthine and guanine to form the corresponding ribonucleotides IMP (inosine 5'-monophosphate) and GMP (guanosine 5'-monophosphate), with the release of PPi. The protein is Hypoxanthine-guanine phosphoribosyltransferase (hpt) of Staphylococcus aureus (strain COL).